The primary structure comprises 405 residues: Deoxyguanosinetriphosphate triphosphohydrolase-like protein (405 aa).

The HD domain occupies 75–219; sequence RLTHTIEVAQ…AAIADDIAYN (145 aa).

It belongs to the dGTPase family. Type 2 subfamily.

The sequence is that of Deoxyguanosinetriphosphate triphosphohydrolase-like protein from Rhizobium johnstonii (strain DSM 114642 / LMG 32736 / 3841) (Rhizobium leguminosarum bv. viciae).